The chain runs to 134 residues: Transmembrane protein 100 (134 aa).

Residues 1–24 (MTEEPTKENLGGPKSPTPVTMEKS) form a disordered region. Residue serine 15 is modified to Phosphoserine. 2 consecutive transmembrane segments (helical) span residues 56–76 (CIIP…AVAY) and 84–104 (VISI…ASSA). Serine 121 carries the phosphoserine modification.

Interacts (via C-terminus) with TRPA1 and TRPV1. Interacts with TASOR.

The protein resides in the cell membrane. The protein localises to the membrane. It localises to the perikaryon. It is found in the cytoplasm. Its subcellular location is the perinuclear region. The protein resides in the endoplasmic reticulum. Its function is as follows. Plays a role during embryonic arterial endothelium differentiation and vascular morphogenesis through the ACVRL1 receptor-dependent signaling pathway upon stimulation by bone morphogenetic proteins, such as GDF2/BMP9 and BMP10. Involved in the regulation of nociception, acting as a modulator of the interaction between TRPA1 and TRPV1, two molecular sensors and mediators of pain signals in dorsal root ganglia (DRG) neurons. Mechanistically, it weakens their interaction, thereby releasing the inhibition of TRPA1 by TRPV1 and increasing the single-channel open probability of the TRPA1-TRPV1 complex. This is Transmembrane protein 100 (Tmem100) from Rattus norvegicus (Rat).